Here is a 151-residue protein sequence, read N- to C-terminus: Ribosome maturation factor RimP (151 aa).

Belongs to the RimP family.

The protein localises to the cytoplasm. Functionally, required for maturation of 30S ribosomal subunits. The polypeptide is Ribosome maturation factor RimP (Haemophilus influenzae (strain PittEE)).